A 536-amino-acid polypeptide reads, in one-letter code: Zinc finger CCCH domain-containing protein 18 (536 aa).

The C3H1-type zinc finger occupies 156 to 183 (EFPVKICHYFNKGFCKHGNNCRYFHGQI). The 84-residue stretch at 211–294 (SLEKLEGEII…HGQHSVILAE (84 aa)) folds into the HTH OST-type domain. In terms of domain architecture, RRM spans 317–392 (RQIYLTFPAE…ARVLVKPYRE (76 aa)).

Its function is as follows. Possesses ribonuclease activity in vitro. In Arabidopsis thaliana (Mouse-ear cress), this protein is Zinc finger CCCH domain-containing protein 18.